The following is a 328-amino-acid chain: Arylacetonitrilase (328 aa).

The 274-residue stretch at 5–278 folds into the CN hydrolase domain; that stretch reads VRVAVTQAEP…EGIIYADLDL (274 aa). Glutamate 45 functions as the Proton acceptor in the catalytic mechanism. The active site involves lysine 125. Catalysis depends on cysteine 160, which acts as the Nucleophile.

Belongs to the carbon-nitrogen hydrolase superfamily. Nitrilase family.

It catalyses the reaction a nitrile + 2 H2O = a carboxylate + NH4(+). The enzyme catalyses 4-chlorophenylacetonitrile + 2 H2O = 4-chlorophenylacetate + NH4(+). Its function is as follows. Nitrilase that hydrolyzes preferentially phenylacetonitrile and (R,S)-mandelonitrile. Also acts on dinitriles like phenylenediacetonitriles (PDAs) 1,2-PDA, 1,3-PDA, and 1,4-PDA, and cyanophenyl acetonitriles (CPAs) 2-CPA and 4-CPA. The chain is Arylacetonitrilase (nit2) from Aspergillus kawachii (strain NBRC 4308) (White koji mold).